The primary structure comprises 94 residues: Large ribosomal subunit protein bL25 (94 aa).

Belongs to the bacterial ribosomal protein bL25 family. In terms of assembly, part of the 50S ribosomal subunit; part of the 5S rRNA/L5/L18/L25 subcomplex. Contacts the 5S rRNA. Binds to the 5S rRNA independently of L5 and L18.

Its function is as follows. This is one of the proteins that binds to the 5S RNA in the ribosome where it forms part of the central protuberance. This Sodalis glossinidius (strain morsitans) protein is Large ribosomal subunit protein bL25.